Consider the following 485-residue polypeptide: Aerolysin-5 (485 aa).

An N-terminal signal peptide occupies residues 1–23 (MQKLKITGLSLIISGLLMAQRHA). 2 disulfide bridges follow: cysteine 42–cysteine 98 and cysteine 182–cysteine 187. The tract at residues 68-84 (WQISGLANGWVIMGPVY) is interaction with host N-linked glycan. The part of the transmembrane beta-barrel after proteolytic activation of the toxin and insertion into the host membrane stretch occupies residues 256–288 (YGLSEKVTTKNKFKWPLVGETELSIEIAANQSW). The segment at 346 to 355 (RWGGNAWYTH) is interaction with glycans from host GPI-anchor. The propeptide occupies 446-485 (AADGKAPRALSARRGEQGLRLAIPLECRKSSPGLASATSA).

Belongs to the aerolysin family. As to quaternary structure, homodimer in solution; homoheptamer in the host membrane. After binding to GPI-anchored proteins in target membranes and proteolytic removal of the C-terminal propeptide, the protein assembles into a heptameric pre-pore complex. A further conformation change leads to insertion into the host membrane. Post-translationally, proteolytic cleavage and subsequent release of the propeptide trigger a major conformation change, leading to the formation of a heptameric pre-pore that then inserts into the host membrane.

The protein localises to the secreted. Its subcellular location is the host cell membrane. In terms of biological role, secreted, cytolytic toxin that forms pores in host membranes after proteolytic removal of a C-terminal propeptide, leading to destruction of the membrane permeability barrier and cell death. The pores are formed by transmembrane beta-strands and are approximately 3 nm in diameter. This Aeromonas hydrophila protein is Aerolysin-5 (ahh5).